The following is a 263-amino-acid chain: 3-methyl-2-oxobutanoate hydroxymethyltransferase (263 aa).

Positions 45 and 84 each coordinate Mg(2+). Residues 45 to 46 (DS), Asp84, and Lys112 each bind 3-methyl-2-oxobutanoate. Glu114 is a binding site for Mg(2+). The active-site Proton acceptor is Glu181.

Belongs to the PanB family. Homodecamer; pentamer of dimers. Requires Mg(2+) as cofactor.

The protein resides in the cytoplasm. It carries out the reaction 3-methyl-2-oxobutanoate + (6R)-5,10-methylene-5,6,7,8-tetrahydrofolate + H2O = 2-dehydropantoate + (6S)-5,6,7,8-tetrahydrofolate. It participates in cofactor biosynthesis; (R)-pantothenate biosynthesis; (R)-pantoate from 3-methyl-2-oxobutanoate: step 1/2. In terms of biological role, catalyzes the reversible reaction in which hydroxymethyl group from 5,10-methylenetetrahydrofolate is transferred onto alpha-ketoisovalerate to form ketopantoate. The protein is 3-methyl-2-oxobutanoate hydroxymethyltransferase of Photorhabdus laumondii subsp. laumondii (strain DSM 15139 / CIP 105565 / TT01) (Photorhabdus luminescens subsp. laumondii).